We begin with the raw amino-acid sequence, 160 residues long: Transcription elongation factor GreA (160 aa).

A coiled-coil region spans residues 12–76; the sequence is EGVKKLEEEL…QLENMLKNAS (65 aa).

Belongs to the GreA/GreB family.

In terms of biological role, necessary for efficient RNA polymerase transcription elongation past template-encoded arresting sites. The arresting sites in DNA have the property of trapping a certain fraction of elongating RNA polymerases that pass through, resulting in locked ternary complexes. Cleavage of the nascent transcript by cleavage factors such as GreA or GreB allows the resumption of elongation from the new 3'terminus. GreA releases sequences of 2 to 3 nucleotides. This Clostridium botulinum (strain Hall / ATCC 3502 / NCTC 13319 / Type A) protein is Transcription elongation factor GreA.